The primary structure comprises 543 residues: Zinc finger protein 280B (543 aa).

M1 is modified (N-acetylmethionine). The segment covering 1 to 10 (MEQSCEEEKE) has biased composition (acidic residues). Residues 1-23 (MEQSCEEEKEPEPQKNIQETKQV) form a disordered region. S68 and S70 each carry phosphoserine. A disordered region spans residues 105–138 (SQLESRSTDSPIIIEPLSKPDYRNSSPQVVPNNS). Low complexity predominate over residues 128-138 (NSSPQVVPNNS). Glycyl lysine isopeptide (Lys-Gly) (interchain with G-Cter in SUMO2) cross-links involve residues K173, K247, and K261. C2H2-type zinc fingers lie at residues 343–366 (TTCQ…ENVH), 373–396 (TVCK…KDHH), 432–454 (LLCP…YRGH), and 460–483 (HQCS…TQCH). The tract at residues 518 to 543 (ASITVSTSDSEPSLPRSKSKISKKSH) is disordered. Residues 534–543 (SKSKISKKSH) are compositionally biased toward basic residues.

The protein localises to the nucleus. In terms of biological role, may function as a transcription factor. The polypeptide is Zinc finger protein 280B (ZNF280B) (Homo sapiens (Human)).